We begin with the raw amino-acid sequence, 76 residues long: uncharacterized protein (76 aa).

This is an uncharacterized protein from Sulfolobus islandicus filamentous virus (isolate Iceland/Hveragerdi) (SIFV).